A 46-amino-acid chain; its full sequence is Putative antitoxin VapB3 (46 aa).

It belongs to the UPF0165 family.

Its function is as follows. Possibly the antitoxin component of a type II toxin-antitoxin (TA) system. Its cognate toxin is VapC3 (Potential). The polypeptide is Putative antitoxin VapB3 (vapB3) (Pyrococcus furiosus (strain ATCC 43587 / DSM 3638 / JCM 8422 / Vc1)).